The primary structure comprises 416 residues: Gamma-glutamyl phosphate reductase (416 aa).

This sequence belongs to the gamma-glutamyl phosphate reductase family.

The protein resides in the cytoplasm. The enzyme catalyses L-glutamate 5-semialdehyde + phosphate + NADP(+) = L-glutamyl 5-phosphate + NADPH + H(+). The protein operates within amino-acid biosynthesis; L-proline biosynthesis; L-glutamate 5-semialdehyde from L-glutamate: step 2/2. Functionally, catalyzes the NADPH-dependent reduction of L-glutamate 5-phosphate into L-glutamate 5-semialdehyde and phosphate. The product spontaneously undergoes cyclization to form 1-pyrroline-5-carboxylate. The polypeptide is Gamma-glutamyl phosphate reductase (Salmonella paratyphi C (strain RKS4594)).